The primary structure comprises 208 residues: Putative speedy protein E7 (208 aa).

The protein belongs to the Speedy/Ringo family.

In Homo sapiens (Human), this protein is Putative speedy protein E7 (SPDYE7P).